Here is a 123-residue protein sequence, read N- to C-terminus: Small ribosomal subunit protein uS12 (123 aa).

The disordered stretch occupies residues 1 to 24 (MPTINQLIRKERKKQVKKSKSPAL). Over residues 10 to 20 (KERKKQVKKSK) the composition is skewed to basic residues. Aspartate 89 bears the 3-methylthioaspartic acid mark.

Belongs to the universal ribosomal protein uS12 family. In terms of assembly, part of the 30S ribosomal subunit. Contacts proteins S8 and S17. May interact with IF1 in the 30S initiation complex.

Functionally, with S4 and S5 plays an important role in translational accuracy. Interacts with and stabilizes bases of the 16S rRNA that are involved in tRNA selection in the A site and with the mRNA backbone. Located at the interface of the 30S and 50S subunits, it traverses the body of the 30S subunit contacting proteins on the other side and probably holding the rRNA structure together. The combined cluster of proteins S8, S12 and S17 appears to hold together the shoulder and platform of the 30S subunit. This is Small ribosomal subunit protein uS12 from Sulfurovum sp. (strain NBC37-1).